The following is a 1720-amino-acid chain: DNA-directed RNA polymerase I subunit RPA1 (1720 aa).

Positions 64, 67, 74, 77, 104, and 107 each coordinate Zn(2+). Positions 110 to 201 (LTCPRAVIHL…IALFWKAHMN (92 aa)) are clamp. 2 residues coordinate Zn(2+): C205 and C208. Residue S240 is modified to Phosphoserine. A clamp region spans residues 320-426 (FTNGQTVNLQ…IRQILEKKEG (107 aa)). The segment at 403 to 416 (DSEMDKLMMDKYPG) is rudder. 3 residues coordinate DNA: K424, R429, and R436. Positions 468-542 (YPQPVTPWNV…QGTKIVCRHV (75 aa)) are involved in RRN3 binding to Pol I complex. Position 552 (R552) interacts with RNA. The Mg(2+) site is built by D588, D590, and D592. D592 lines the RNA pocket. The segment at 805-883 (KPKADVKRQR…NEINKACMPF (79 aa)) is funnel. The interval 960 to 1001 (KPPEFFFHCMAGREGLVDTAVKTSRSGYLQRCIIKHLEGLVV) is bridging helix. Positions 1060 to 1155 (ADPKKALHHF…SLSVWRPDIY (96 aa)) are mediates the interaction with TOP2A. The trigger loop stretch occupies residues 1207–1248 (PGEAVGLLAAQSIGEPSTQMTLNTFHFAGRGEMNVTLGIPRL). R1249 is a DNA binding site. The disordered stretch occupies residues 1365–1498 (RNVNTRRATQ…SQEPQGPEAM (134 aa)). Basic and acidic residues predominate over residues 1373 to 1390 (TQRDLDNAGELGRSRGEQ). A Phosphoserine modification is found at S1386. 2 stretches are compositionally biased toward acidic residues: residues 1391-1412 (EGDE…DADA) and 1422-1446 (EEEV…EDMQ). The span at 1447 to 1461 (EERNPHREGARKTQE) shows a compositional bias: basic and acidic residues. Positions 1462–1474 (QDEEVGLGTEEDP) are enriched in acidic residues.

Belongs to the RNA polymerase beta' chain family. In terms of assembly, component of the RNA polymerase I (Pol I) complex consisting of 13 subunits: a ten-subunit catalytic core composed of POLR1A/RPA1, POLR1B/RPA2, POLR1C/RPAC1, POLR1D/RPAC2, POLR1H/RPA12, POLR2E/RPABC1, POLR2F/RPABC2, POLR2H/RPABC3, POLR2K/RPABC4 and POLR2L/RPABC5; a mobile stalk subunit POLR1F/RPA43 protruding from the core and additional subunits homologous to general transcription factors POLR1E/RPA49 and POLR1G/RPA34. Part of Pol I pre-initiation complex (PIC), in which Pol I core assembles with RRN3 and promoter-bound UTBF and SL1/TIF-IB complex. Interacts (via dock II domain) with TOP2A; this interaction may assist Pol I transcription initiation by releasing supercoils occurring during DNA unwinding. Interacts with CAVIN1; this interaction induces the dissociation of Pol I complex paused at rDNA terminator sequences. Interacts with MYO1C. Interacts with ERBB2. Interacts with DDX11. Interacts with RECQL5. The cofactor is Mg(2+).

It is found in the nucleus. The protein localises to the nucleolus. It localises to the chromosome. The catalysed reaction is RNA(n) + a ribonucleoside 5'-triphosphate = RNA(n+1) + diphosphate. In terms of biological role, catalytic core component of RNA polymerase I (Pol I), a DNA-dependent RNA polymerase which synthesizes ribosomal RNA precursors using the four ribonucleoside triphosphates as substrates. Transcribes 47S pre-rRNAs from multicopy rRNA gene clusters, giving rise to 5.8S, 18S and 28S ribosomal RNAs. Pol I-mediated transcription cycle proceeds through transcription initiation, transcription elongation and transcription termination stages. During transcription initiation, Pol I pre-initiation complex (PIC) is recruited by the selectivity factor 1 (SL1/TIF-IB) complex bound to the core promoter that precedes an rDNA repeat unit. The PIC assembly bends the promoter favoring the formation of the transcription bubble and promoter escape. Once the polymerase has escaped from the promoter it enters the elongation phase during which RNA is actively polymerized, based on complementarity with the template DNA strand. Highly processive, assembles in structures referred to as 'Miller trees' where many elongating Pol I complexes queue and transcribe the same rDNA coding regions. At terminator sequences downstream of the rDNA gene, PTRF interacts with Pol I and halts Pol I transcription leading to the release of the RNA transcript and polymerase from the DNA. Forms Pol I active center together with the second largest subunit POLR1B/RPA2. Appends one nucleotide at a time to the 3' end of the nascent RNA, with POLR1A/RPA1 contributing a Mg(2+)-coordinating DxDGD motif, and POLR1B/RPA2 participating in the coordination of a second Mg(2+) ion and providing lysine residues believed to facilitate Watson-Crick base pairing between the incoming nucleotide and the template base. Typically, Mg(2+) ions direct a 5' nucleoside triphosphate to form a phosphodiester bond with the 3' hydroxyl of the preceding nucleotide of the nascent RNA, with the elimination of pyrophosphate. Has proofreading activity: Pauses and backtracks to allow the cleavage of a missincorporated nucleotide via POLR1H/RPA12. High Pol I processivity is associated with decreased transcription fidelity. In Homo sapiens (Human), this protein is DNA-directed RNA polymerase I subunit RPA1.